Here is a 673-residue protein sequence, read N- to C-terminus: Acetoacetyl-CoA synthetase (673 aa).

Belongs to the ATP-dependent AMP-binding enzyme family.

Its subcellular location is the cytoplasm. It localises to the cytosol. It carries out the reaction acetoacetate + ATP + CoA = acetoacetyl-CoA + AMP + diphosphate. In terms of biological role, converts acetoacetate to acetoacetyl-CoA in the cytosol. Ketone body-utilizing enzyme, responsible for the synthesis of cholesterol and fatty acids. The protein is Acetoacetyl-CoA synthetase (aacs) of Danio rerio (Zebrafish).